The following is a 97-amino-acid chain: Aspartyl/glutamyl-tRNA(Asn/Gln) amidotransferase subunit C (97 aa).

Belongs to the GatC family. As to quaternary structure, heterotrimer of A, B and C subunits.

It carries out the reaction L-glutamyl-tRNA(Gln) + L-glutamine + ATP + H2O = L-glutaminyl-tRNA(Gln) + L-glutamate + ADP + phosphate + H(+). The enzyme catalyses L-aspartyl-tRNA(Asn) + L-glutamine + ATP + H2O = L-asparaginyl-tRNA(Asn) + L-glutamate + ADP + phosphate + 2 H(+). Functionally, allows the formation of correctly charged Asn-tRNA(Asn) or Gln-tRNA(Gln) through the transamidation of misacylated Asp-tRNA(Asn) or Glu-tRNA(Gln) in organisms which lack either or both of asparaginyl-tRNA or glutaminyl-tRNA synthetases. The reaction takes place in the presence of glutamine and ATP through an activated phospho-Asp-tRNA(Asn) or phospho-Glu-tRNA(Gln). This Listeria welshimeri serovar 6b (strain ATCC 35897 / DSM 20650 / CCUG 15529 / CIP 8149 / NCTC 11857 / SLCC 5334 / V8) protein is Aspartyl/glutamyl-tRNA(Asn/Gln) amidotransferase subunit C.